Reading from the N-terminus, the 158-residue chain is Small ribosomal subunit protein uS7 (158 aa).

It belongs to the universal ribosomal protein uS7 family. As to quaternary structure, part of the 30S ribosomal subunit. Contacts proteins S9 and S11.

In terms of biological role, one of the primary rRNA binding proteins, it binds directly to 16S rRNA where it nucleates assembly of the head domain of the 30S subunit. Is located at the subunit interface close to the decoding center, probably blocks exit of the E-site tRNA. This Azobacteroides pseudotrichonymphae genomovar. CFP2 protein is Small ribosomal subunit protein uS7.